Here is a 151-residue protein sequence, read N- to C-terminus: Ribosome maturation factor RimP (151 aa).

The protein belongs to the RimP family.

The protein localises to the cytoplasm. Functionally, required for maturation of 30S ribosomal subunits. This is Ribosome maturation factor RimP from Endomicrobium trichonymphae.